Here is a 108-residue protein sequence, read N- to C-terminus: UPF0145 protein Npun_F4817 (108 aa).

This sequence belongs to the UPF0145 family.

The protein is UPF0145 protein Npun_F4817 of Nostoc punctiforme (strain ATCC 29133 / PCC 73102).